We begin with the raw amino-acid sequence, 513 residues long: Maturase K (513 aa).

This sequence belongs to the intron maturase 2 family. MatK subfamily.

It is found in the plastid. It localises to the chloroplast. Functionally, usually encoded in the trnK tRNA gene intron. Probably assists in splicing its own and other chloroplast group II introns. In Saccharum officinarum (Sugarcane), this protein is Maturase K.